The primary structure comprises 373 residues: Probable tRNA sulfurtransferase (373 aa).

In terms of domain architecture, THUMP spans 54-158 (NKNIEELSKV…NDVAYFYYKI (105 aa)). ATP contacts are provided by residues 176-177 (LF), 201-202 (NF), lysine 256, glycine 278, and glutamine 287.

This sequence belongs to the ThiI family.

It is found in the cytoplasm. It carries out the reaction [ThiI sulfur-carrier protein]-S-sulfanyl-L-cysteine + a uridine in tRNA + 2 reduced [2Fe-2S]-[ferredoxin] + ATP + H(+) = [ThiI sulfur-carrier protein]-L-cysteine + a 4-thiouridine in tRNA + 2 oxidized [2Fe-2S]-[ferredoxin] + AMP + diphosphate. The catalysed reaction is [ThiS sulfur-carrier protein]-C-terminal Gly-Gly-AMP + S-sulfanyl-L-cysteinyl-[cysteine desulfurase] + AH2 = [ThiS sulfur-carrier protein]-C-terminal-Gly-aminoethanethioate + L-cysteinyl-[cysteine desulfurase] + A + AMP + 2 H(+). It functions in the pathway cofactor biosynthesis; thiamine diphosphate biosynthesis. In terms of biological role, catalyzes the ATP-dependent transfer of a sulfur to tRNA to produce 4-thiouridine in position 8 of tRNAs, which functions as a near-UV photosensor. Also catalyzes the transfer of sulfur to the sulfur carrier protein ThiS, forming ThiS-thiocarboxylate. This is a step in the synthesis of thiazole, in the thiamine biosynthesis pathway. The sulfur is donated as persulfide by IscS. This Saccharolobus islandicus (strain Y.N.15.51 / Yellowstone #2) (Sulfolobus islandicus) protein is Probable tRNA sulfurtransferase.